The primary structure comprises 50 residues: Protease inhibitor 2 (50 aa).

The Kazal-like domain maps to 2-50 (EDCVGRKACTREWYPVCGSDGVTYSNPCNFSAQQEQCDPNITIAHMGEC). 2 disulfides stabilise this stretch: Cys-10–Cys-29 and Cys-18–Cys-50. N-linked (GlcNAc...) asparagine glycans are attached at residues Asn-30 and Asn-41.

Its function is as follows. Serine protease inhibitor. Strongly inhibits human neutrophil elastase and trypsin, also inhibits porcine pancreatic elastase and subtilisin A. Does not inhibit chymotrypsin, plasma kallikrein, pancreatic kallikrein, thrombin or papain. The polypeptide is Protease inhibitor 2 (Cenchritis muricatus (Beaded periwinkle)).